Here is a 258-residue protein sequence, read N- to C-terminus: Calcium release-activated calcium channel protein 1 (258 aa).

Residues 1 to 63 are Cytoplasmic-facing; that stretch reads MYPECGVETK…SRAKLKASSR (63 aa). A helical transmembrane segment spans residues 64–81; it reads TSALLSGFAMVAMVEVQL. Topologically, residues 82–91 are extracellular; it reads EPNHAYPPGL. The chain crosses the membrane as a helical span at residues 92–112; that stretch reads LIAFSACTTVLVAVHLFALMV. At 113–145 the chain is on the cytoplasmic side; the sequence is STCILPNIEAVSNVHNLNSVKESPHERMHHHIE. The helical transmembrane segment at 146–166 threads the bilayer; it reads LAWAFSTVIGTLLFLAEVVLL. Over 167–192 the chain is Extracellular; it reads CWVKFLPVNSPKISSNETSAVSSGQA. N-linked (GlcNAc...) asparagine glycosylation occurs at Asn-182. The chain crosses the membrane as a helical span at residues 193–213; it reads AAITSTAIMVPFGLVFIVFAV. The Cytoplasmic portion of the chain corresponds to 214–258; it reads HFYRSLVSHKTDRQFQELNELAELAQLQDQLDHRGDPVQSPVHYA.

The protein belongs to the Orai family.

The protein resides in the cell membrane. Its function is as follows. Ca(2+) release-activated Ca(2+) (CRAC) channel subunit which mediates Ca(2+) influx following depletion of intracellular Ca(2+) stores. The sequence is that of Calcium release-activated calcium channel protein 1 (orai1) from Xenopus laevis (African clawed frog).